The primary structure comprises 92 residues: Small ribosomal subunit protein uS19 (92 aa).

The protein belongs to the universal ribosomal protein uS19 family.

Protein S19 forms a complex with S13 that binds strongly to the 16S ribosomal RNA. The chain is Small ribosomal subunit protein uS19 from Rickettsia canadensis (strain McKiel).